A 97-amino-acid polypeptide reads, in one-letter code: Apolipoprotein C-II (97 aa).

Residues 1–22 form the signal peptide; it reads MGSRFFLALFLVLLVLGNEVQG. The tract at residues 63–71 is lipid binding; it reads SVDEKLRDM. The interval 75 to 97 is lipoprotein lipase cofactor; it reads SSAAMSTYAGIFTDQLLTLLKGE.

It belongs to the apolipoprotein C2 family. Proapolipoprotein C-II is synthesized as a sialic acid containing glycoprotein which is subsequently desialylated prior to its proteolytic processing. Post-translationally, proapolipoprotein C-II, the major form found in plasma undergoes proteolytic cleavage of its N-terminal hexapeptide to generate the mature form apolipoprotein C-II, which occurs as the minor form in plasma.

The protein resides in the secreted. In terms of biological role, component of chylomicrons, very low-density lipoproteins (VLDL), low-density lipoproteins (LDL), and high-density lipoproteins (HDL) in plasma. Plays an important role in lipoprotein metabolism as an activator of lipoprotein lipase. This is Apolipoprotein C-II (Apoc2) from Grammomys surdaster (African woodland thicket rat).